We begin with the raw amino-acid sequence, 446 residues long: Alpha-galacturonidase (446 aa).

Position 10–72 (10–72 (IKIAYIGGGS…GRWRYEAVST (63 aa))) interacts with NAD(+). Residue Asn151 coordinates substrate. Position 173 (Cys173) interacts with Mn(2+). His174 serves as the catalytic Proton donor. His210 contacts Mn(2+).

This sequence belongs to the glycosyl hydrolase 4 family. As to quaternary structure, homotetramer. The cofactor is NAD(+). Mn(2+) is required as a cofactor.

It carries out the reaction [(1-&gt;4)-alpha-D-galacturonosyl](n) + H2O = alpha-D-galacturonate + [(1-&gt;4)-alpha-D-galacturonosyl](n-1). Alpha-galacturonidase able to catalyze the hydrolysis of the chromogenic substrate p-nitrophenyl-alpha-D-galacturonic acid (pNPalphaGalUA), and of the probable natural substrate alpha-1,4-di-galacturonate (GalUA(2)). Can neither hydrolyze pNPbetaGalUA, nor the stereoisomeric pNPalphaGlcUA. Does not display alpha- or beta-glucosidase activity as it fails to hydrolyze melibiose, raffinose, lactose and the chromogenic analogs, pNPalphaGal and pNPbetaGal. Cannot use the following compounds as substrates: pNP-N-acetyl-alpha- and beta-D-galactosaminide, pNP-N-acetyl-alpha- and beta-D-glucosaminide, pNP-alpha-L- and beta-L-arabinopyranoside, pNP-alpha- and beta-D-glucuronide, pNP-alpha- and beta-D-glucopyranoside, pNP-alpha- and beta-D-glucopyranoside 6-phosphate, pNP-alpha-D-galactopyranoside 6-phosphate and oNP-beta-D-galactopyranoside 6-phosphate. This is Alpha-galacturonidase (lplD) from Bacillus subtilis (strain 168).